We begin with the raw amino-acid sequence, 89 residues long: Small ribosomal subunit protein uS15 (89 aa).

It belongs to the universal ribosomal protein uS15 family. As to quaternary structure, part of the 30S ribosomal subunit. Forms a bridge to the 50S subunit in the 70S ribosome, contacting the 23S rRNA.

Functionally, one of the primary rRNA binding proteins, it binds directly to 16S rRNA where it helps nucleate assembly of the platform of the 30S subunit by binding and bridging several RNA helices of the 16S rRNA. Its function is as follows. Forms an intersubunit bridge (bridge B4) with the 23S rRNA of the 50S subunit in the ribosome. The polypeptide is Small ribosomal subunit protein uS15 (Shewanella putrefaciens (strain CN-32 / ATCC BAA-453)).